We begin with the raw amino-acid sequence, 310 residues long: Coproporphyrin III ferrochelatase (310 aa).

Position 13 (Tyr-13) interacts with Fe-coproporphyrin III. Tyr-13 is an N-methylmesoporphyrin binding site. Residue Glu-20 coordinates Mg(2+). Arg-30 serves as a coordination point for Fe-coproporphyrin III. Residue 31–33 coordinates N-methylmesoporphyrin; it reads RGR. Arg-46 is a Mg(2+) binding site. Residues 46–47, Ser-54, and Tyr-125 contribute to the Fe-coproporphyrin III site; that span reads RY. 2 residues coordinate N-methylmesoporphyrin: His-183 and Lys-188. His-183 contributes to the Fe(2+) binding site. Residue Glu-264 participates in Fe(2+) binding. Mg(2+)-binding residues include Asp-268 and Glu-272.

Belongs to the ferrochelatase family. As to quaternary structure, monomer. Interacts with frataxin/Fra.

It localises to the cytoplasm. The enzyme catalyses Fe-coproporphyrin III + 2 H(+) = coproporphyrin III + Fe(2+). It functions in the pathway porphyrin-containing compound metabolism; protoheme biosynthesis. Stimulated by Mg(2+). Inhibited by Cd(2+). Inhibited by N-methylmesoporphyrin (N-MeMP) and 2,4-disulfonic acid deuteroporphyrin IX (dSDP). Its function is as follows. Involved in coproporphyrin-dependent heme b biosynthesis. Catalyzes the insertion of ferrous iron into coproporphyrin III to form Fe-coproporphyrin III. It can also insert iron into protoporphyrin IX. Has weaker activity with 2,4 disulfonate, deuteroporphyrin and 2,4 hydroxyethyl. In vitro, can also use Zn(2+) or Cu(2+). This Bacillus subtilis (strain 168) protein is Coproporphyrin III ferrochelatase.